A 2437-amino-acid chain; its full sequence is Neurogenic locus notch homolog protein 1 (2437 aa).

Residues 1-20 (MNRFLVKLTLLTAASLATVA) form the signal peptide. EGF-like domains follow at residues 21–57 (QGQR…AQCQ), 58–98 (FPNP…RLCL), 101–138 (VNHA…KTCQ), and 139–175 (LADP…QTCR). Residues 21–1726 (QGQRCSEYCQ…GGPPKTGEMY (1706 aa)) lie on the Extracellular side of the membrane. 111 disulfides stabilise this stretch: Cys-25-Cys-35, Cys-29-Cys-45, Cys-47-Cys-56, Cys-62-Cys-73, Cys-67-Cys-86, Cys-88-Cys-97, Cys-105-Cys-116, Cys-110-Cys-126, Cys-128-Cys-137, Cys-143-Cys-154, Cys-148-Cys-163, Cys-165-Cys-174, Cys-181-Cys-194, Cys-188-Cys-203, Cys-205-Cys-214, Cys-221-Cys-232, Cys-226-Cys-242, Cys-244-Cys-253, Cys-260-Cys-271, Cys-265-Cys-280, Cys-282-Cys-291, Cys-298-Cys-311, Cys-305-Cys-320, Cys-322-Cys-331, Cys-338-Cys-349, Cys-343-Cys-358, Cys-360-Cys-369, Cys-375-Cys-386, Cys-380-Cys-397, Cys-399-Cys-408, Cys-415-Cys-428, Cys-422-Cys-437, Cys-439-Cys-448, Cys-455-Cys-466, Cys-460-Cys-475, Cys-477-Cys-486, Cys-493-Cys-503, Cys-498-Cys-512, Cys-514-Cys-523, Cys-530-Cys-541, Cys-535-Cys-550, Cys-552-Cys-561, Cys-568-Cys-578, Cys-573-Cys-587, Cys-589-Cys-598, Cys-605-Cys-616, Cys-610-Cys-625, Cys-627-Cys-636, Cys-643-Cys-653, Cys-648-Cys-662, Cys-664-Cys-673, Cys-680-Cys-691, Cys-685-Cys-700, Cys-702-Cys-711, Cys-718-Cys-728, Cys-723-Cys-737, Cys-739-Cys-748, Cys-755-Cys-766, Cys-760-Cys-775, Cys-777-Cys-786, Cys-793-Cys-804, Cys-798-Cys-813, Cys-815-Cys-824, Cys-831-Cys-842, Cys-836-Cys-853, Cys-855-Cys-864, Cys-871-Cys-882, Cys-876-Cys-891, Cys-893-Cys-902, Cys-909-Cys-920, Cys-914-Cys-929, Cys-931-Cys-940, Cys-947-Cys-958, Cys-952-Cys-967, Cys-969-Cys-978, Cys-985-Cys-996, Cys-990-Cys-1005, Cys-1007-Cys-1016, Cys-1023-Cys-1034, Cys-1028-Cys-1043, Cys-1045-Cys-1054, Cys-1061-Cys-1072, Cys-1066-Cys-1081, Cys-1083-Cys-1092, Cys-1099-Cys-1120, Cys-1114-Cys-1129, Cys-1131-Cys-1140, Cys-1147-Cys-1158, Cys-1152-Cys-1167, Cys-1169-Cys-1178, Cys-1185-Cys-1196, Cys-1190-Cys-1205, Cys-1207-Cys-1216, Cys-1223-Cys-1242, Cys-1236-Cys-1251, Cys-1253-Cys-1262, Cys-1269-Cys-1282, Cys-1274-Cys-1291, Cys-1293-Cys-1302, Cys-1309-Cys-1320, Cys-1314-Cys-1332, Cys-1334-Cys-1343, Cys-1350-Cys-1361, Cys-1355-Cys-1370, Cys-1372-Cys-1381, Cys-1389-Cys-1400, Cys-1394-Cys-1411, Cys-1413-Cys-1422, Cys-1447-Cys-1470, Cys-1452-Cys-1465, and Cys-1461-Cys-1477. Positions 177–215 (DVNECAVSPSPCRNGGTCINEVGSYLCRCPPEYTGPHCQ) constitute an EGF-like 5; calcium-binding domain. An EGF-like 6 domain is found at 217–254 (LYQPCLPSPCRSGGTCVQTSDTTHTCSCLPGFTGQTCE). Thr-231 carries O-linked (Fuc...) threonine; alternate glycosylation. An O-linked (GalNAc...) threonine; alternate glycan is attached at Thr-231. The EGF-like 7; calcium-binding domain occupies 256–292 (NVDDCTQHACENGGPCIDGINTYNCHCDKHWTGQYCT). Residues 294–332 (DVDECELSPNACQNGGTCHNTIGGFHCVCVNGWTGDDCS) enclose the EGF-like 8; calcium-binding domain. The EGF-like 9; calcium-binding domain occupies 334–370 (NIDDCASAACSHGATCHDRVASFFCECPHGRTGLLCH). In terms of domain architecture, EGF-like 10 spans 371-409 (LDDACISNPCQKGSNCDTNPVSGKAICTCPPGYTGSACN). Positions 411 to 449 (DIDECSLGANPCEHGGRCLNTKGSFQCKCLQGYEGPRCE) constitute an EGF-like 11; calcium-binding domain. The EGF-like 12; calcium-binding domain occupies 451 to 487 (DVNECKSNPCQNDATCLDQIGGFHCICMPGYEGVFCQ). The EGF-like 13; calcium-binding domain occupies 489–524 (NSDDCASQPCLNGKCIDKINSFHCECPKGFSGSLCQ). An EGF-like 14; calcium-binding domain is found at 526-562 (DVDECASTPCKNGAKCTDGPNKYTCECTPGFSGIHCE). In terms of domain architecture, EGF-like 15; calcium-binding spans 564–599 (DINECASSPCHYGVCRDGVASFTCDCRPGYTGRLCE). The 37-residue stretch at 601–637 (NINECLSQPCRNGGTCQDRENAYICTCPKGTTGVNCE) folds into the EGF-like 16; calcium-binding domain. The EGF-like 17; calcium-binding domain maps to 639 to 674 (NIDDCKRKPCDYGKCIDKINGYECVCEPGYSGSMCN). One can recognise an EGF-like 18; calcium-binding domain in the interval 676–712 (NIDDCALNPCHNGGTCIDGVNSFTCLCPDGFRDATCL). An EGF-like 19; calcium-binding domain is found at 714–749 (QHNECSSNPCIHGSCLDQINSYRCVCEAGWMGRNCD). Residues 751-787 (NINECLSNPCVNGGTCKDMTSGYLCTCRAGFSGPNCQ) enclose the EGF-like 20; calcium-binding domain. In terms of domain architecture, EGF-like 21; calcium-binding spans 789 to 825 (NINECASNPCLNQGSCIDDVAGFKCNCMLPYTGEVCE). The region spanning 827-865 (VLAPCSPRPCKNGGVCRESEDFQSFSCNCPAGWQGQTCE) is the EGF-like 22 domain. Residues 867 to 903 (DINECVRNPCTNGGVCENLRGGFQCRCNPGFTGALCE) form the EGF-like 23; calcium-binding domain. The EGF-like 24; calcium-binding domain maps to 905–941 (DIDDCEPNPCSNGGVCQDRVNGFVCVCLAGFRGERCA). The region spanning 943–979 (DIDECVSAPCRNGGNCTDCVNSYTCSCPAGFSGINCE) is the EGF-like 25; calcium-binding domain. Asn-957 is a glycosylation site (N-linked (GlcNAc...) asparagine). The region spanning 981-1017 (NTPDCTESSCFNGGTCVDGISSFSCVCLPGFTGNYCQ) is the EGF-like 26 domain. Residues 1019 to 1055 (DVNECDSRPCQNGGSCQDGYGTYKCTCPHGYTGLNCQ) enclose the EGF-like 27; calcium-binding domain. EGF-like domains are found at residues 1057–1093 (LVRW…IYCD) and 1095–1141 (PSVS…SYCQ). Residues 1143–1179 (QVDECQPNPCQNGATCTDYLGGYSCECVPGYHGMNCS) enclose the EGF-like 30; calcium-binding domain. An N-linked (GlcNAc...) asparagine glycan is attached at Asn-1177. Residues 1181–1217 (EINECLSQPCQNGGTCIDLVNTYKCSCPRGTQGVHCE) form the EGF-like 31; calcium-binding domain. One can recognise an EGF-like 32; calcium-binding domain in the interval 1219 to 1263 (DIDDCSPSVDPLTGEPRCFNGGRCVDRVGGYGCVCPAGFVGERCE). EGF-like domains lie at 1265–1303 (DVNE…KRCE), 1305–1344 (VFNG…SSCE), 1346–1382 (DSQS…HECQ), and 1385–1423 (MDSP…LLCH). O-linked (Fuc...) threonine; alternate glycosylation is present at Thr-1399. Residue Thr-1399 is glycosylated (O-linked (GalNAc...) threonine; alternate). 3 LNR repeats span residues 1447–1487 (CEIA…PWQN), 1488–1525 (CSAA…LEGQ), and 1526–1566 (CNPL…VPQK). N-linked (GlcNAc...) asparagine glycosylation is present at Asn-1487. 6 disulfide bridges follow: Cys-1488–Cys-1512, Cys-1494–Cys-1507, Cys-1503–Cys-1519, Cys-1526–Cys-1552, Cys-1534–Cys-1547, and Cys-1543–Cys-1559. An N-linked (GlcNAc...) asparagine glycan is attached at Asn-1585. The chain crosses the membrane as a helical span at residues 1727–1747 (PMFLVLLALAVLALAAVGVVV). At 1748–2437 (SRKRKREHGQ…QMNHIPEAFK (690 aa)) the chain is on the cytoplasmic side. The tract at residues 1770–1790 (KKKRREPVGEDSVGLKPLKNS) is disordered. ANK repeat units follow at residues 1867–1910 (DGFT…NLHN), 1915–1944 (TGET…DANV), 1948–1978 (MGRT…DLDA), 1982–2011 (DGTT…DPNA), 2015–2044 (SGKS…NKDL), and 2048–2077 (KEET…NRDI). Disordered stretches follow at residues 2127-2174 (IKPS…GGIM) and 2356-2437 (RMAP…EAFK). The span at 2356-2387 (RMAPPISSTQFLTPPSQHSYSNPMDNTPNHQQ) shows a compositional bias: polar residues. Positions 2396-2411 (PSAGSPDQWSSSSPHS) are enriched in low complexity. The span at 2412-2429 (NLSDWSEGISSPPTSMQM) shows a compositional bias: polar residues.

Belongs to the NOTCH family. In terms of processing, synthesized in the endoplasmic reticulum as an inactive form which is proteolytically cleaved by a furin-like convertase in the trans-Golgi network before it reaches the plasma membrane to yield an active, ligand-accessible form. Cleavage results in a C-terminal fragment N(TM) and a N-terminal fragment N(EC). Following ligand binding, it is cleaved by adam17 to yield a membrane-associated intermediate fragment called notch extracellular truncation (NEXT). Following endocytosis, this fragment is then cleaved by presenilin dependent gamma-secretase to release a Notch-derived peptide containing the intracellular domain (NICD) from the membrane. O-glycosylated on the EGF-like domains. Contains both O-linked fucose and O-linked glucose. O-linked glycosylation by galnt11 is involved in determination of left/right symmetry: glycosylation promotes activation of notch1, possibly by promoting cleavage by adam17, modulating the balance between motile and immotile (sensory) cilia at the left-right organiser (LRO).

It localises to the cell membrane. It is found in the nucleus. Its function is as follows. Functions as a receptor for membrane-bound ligands Jagged-1 (JAG1), Jagged-2 (JAG2) and Delta-1 (DLL1) to regulate cell-fate determination. Upon ligand activation through the released notch intracellular domain (NICD) it forms a transcriptional activator complex with RBPJ/RBPSUH and activates genes of the enhancer of split locus. Affects the implementation of differentiation, proliferation and apoptotic programs. Involved in angiogenesis; negatively regulates endothelial cell proliferation and migration and angiogenic sprouting. Involved in the maturation of both CD4(+) and CD8(+) cells in the thymus. Important for follicular differentiation and possibly cell fate selection within the follicle. During cerebellar development, functions as a receptor for neuronal DNER and is involved in the differentiation of Bergmann glia. Represses neuronal and myogenic differentiation. May play an essential role in postimplantation development, probably in some aspect of cell specification and/or differentiation. May be involved in mesoderm development, somite formation and neurogenesis. Involved in determination of left/right symmetry by modulating the balance between motile and immotile (sensory) cilia at the left-right organiser (LRO). The protein is Neurogenic locus notch homolog protein 1 (notch1a) of Danio rerio (Zebrafish).